The sequence spans 349 residues: Anthranilate phosphoribosyltransferase (349 aa).

Residues Gly82, 85-86 (GD), 92-95 (NVST), 110-118 (KHGNRAVSG), and Ser122 contribute to the 5-phospho-alpha-D-ribose 1-diphosphate site. Position 82 (Gly82) interacts with anthranilate. Ser94 contacts Mg(2+). Asn113 is a binding site for anthranilate. Arg168 is an anthranilate binding site. 2 residues coordinate Mg(2+): Asp227 and Glu228.

The protein belongs to the anthranilate phosphoribosyltransferase family. In terms of assembly, homodimer. The cofactor is Mg(2+).

The enzyme catalyses N-(5-phospho-beta-D-ribosyl)anthranilate + diphosphate = 5-phospho-alpha-D-ribose 1-diphosphate + anthranilate. It functions in the pathway amino-acid biosynthesis; L-tryptophan biosynthesis; L-tryptophan from chorismate: step 2/5. Its function is as follows. Catalyzes the transfer of the phosphoribosyl group of 5-phosphorylribose-1-pyrophosphate (PRPP) to anthranilate to yield N-(5'-phosphoribosyl)-anthranilate (PRA). The chain is Anthranilate phosphoribosyltransferase from Pseudomonas fluorescens (strain SBW25).